Here is a 340-residue protein sequence, read N- to C-terminus: Cell invasion protein SipD (340 aa).

2 disordered regions span residues 1 to 26 and 57 to 76; these read MLNI…PSAS and QAQQ…NDER. The stretch at 291-319 forms a coiled coil; that stretch reads FKAQEENLKTTLQTLTQKYSNANSLYDNL.

This sequence belongs to the invasin protein D family.

Its subcellular location is the secreted. Functionally, required for translocation of effector proteins via the type III secretion system SPI-1, which is essential for an efficient bacterial internalization. Probably acts by modulating the secretion of SipA, SipB, and SipC. The sequence is that of Cell invasion protein SipD (sipD) from Salmonella typhi.